Consider the following 102-residue polypeptide: NADH-quinone oxidoreductase subunit K (102 aa).

Transmembrane regions (helical) follow at residues 5 to 25 (LSHY…GIFL), 31 to 51 (IVIL…MVAF), and 65 to 85 (LFIL…LVVF).

It belongs to the complex I subunit 4L family. As to quaternary structure, NDH-1 is composed of 14 different subunits. Subunits NuoA, H, J, K, L, M, N constitute the membrane sector of the complex.

The protein resides in the cell inner membrane. It catalyses the reaction a quinone + NADH + 5 H(+)(in) = a quinol + NAD(+) + 4 H(+)(out). Its function is as follows. NDH-1 shuttles electrons from NADH, via FMN and iron-sulfur (Fe-S) centers, to quinones in the respiratory chain. The immediate electron acceptor for the enzyme in this species is believed to be ubiquinone. Couples the redox reaction to proton translocation (for every two electrons transferred, four hydrogen ions are translocated across the cytoplasmic membrane), and thus conserves the redox energy in a proton gradient. The protein is NADH-quinone oxidoreductase subunit K of Agrobacterium fabrum (strain C58 / ATCC 33970) (Agrobacterium tumefaciens (strain C58)).